The sequence spans 679 residues: Protein polyglycylase TTLL10 (679 aa).

Over residues M1–R15 the composition is skewed to basic residues. Disordered stretches follow at residues M1–S33, G49–A77, and V96–S124. Polar residues predominate over residues S18 to G30. The segment covering V96 to H110 has biased composition (basic residues). The region spanning Q172–K543 is the TTL domain. Residues K304, Q310 to G311, Q353 to V356, K366 to D368, and T409 to N410 contribute to the ATP site. Residue Q310 coordinates a protein. Mg(2+) is bound by residues D489, E502, and N504. Positions D605–S679 are disordered.

It depends on Mg(2+) as a cofactor.

The protein localises to the cytoplasm. It localises to the cytoskeleton. It is found in the cell projection. The protein resides in the cilium. Its subcellular location is the cilium axoneme. The enzyme catalyses (glycyl)(n)-glycyl-L-glutamyl-[protein] + glycine + ATP = (glycyl)(n+1)-glycyl-L-glutamyl-[protein] + ADP + phosphate + H(+). In terms of biological role, polyglycylase which modifies both tubulin and non-tubulin proteins, generating polyglycine side chains of variable lengths on the gamma-carboxyl groups of specific glutamate residues of target proteins. Involved in the elongation step rather than the initiation step of the polyglycylation reaction. Polyglycylates alpha-tubulin and beta-tubulin. Polyglycylates non-tubulin proteins such as nucleosome assembly protein NAP1. This is Protein polyglycylase TTLL10 from Rattus norvegicus (Rat).